Consider the following 275-residue polypeptide: Formamidopyrimidine-DNA glycosylase (275 aa).

The Schiff-base intermediate with DNA role is filled by proline 2. The active-site Proton donor is glutamate 3. Lysine 58 (proton donor; for beta-elimination activity) is an active-site residue. Residues histidine 91, arginine 109, and arginine 154 each coordinate DNA. Residues 240–274 (AVYERAGLPCRVCGTPIRRLVQGQRATYFCPSCQK) form an FPG-type zinc finger. Arginine 264 acts as the Proton donor; for delta-elimination activity in catalysis.

The protein belongs to the FPG family. In terms of assembly, monomer. Zn(2+) is required as a cofactor.

It catalyses the reaction Hydrolysis of DNA containing ring-opened 7-methylguanine residues, releasing 2,6-diamino-4-hydroxy-5-(N-methyl)formamidopyrimidine.. The enzyme catalyses 2'-deoxyribonucleotide-(2'-deoxyribose 5'-phosphate)-2'-deoxyribonucleotide-DNA = a 3'-end 2'-deoxyribonucleotide-(2,3-dehydro-2,3-deoxyribose 5'-phosphate)-DNA + a 5'-end 5'-phospho-2'-deoxyribonucleoside-DNA + H(+). Functionally, involved in base excision repair of DNA damaged by oxidation or by mutagenic agents. Acts as a DNA glycosylase that recognizes and removes damaged bases. Has a preference for oxidized purines, such as 7,8-dihydro-8-oxoguanine (8-oxoG). Has AP (apurinic/apyrimidinic) lyase activity and introduces nicks in the DNA strand. Cleaves the DNA backbone by beta-delta elimination to generate a single-strand break at the site of the removed base with both 3'- and 5'-phosphates. The sequence is that of Formamidopyrimidine-DNA glycosylase from Bordetella pertussis (strain Tohama I / ATCC BAA-589 / NCTC 13251).